The sequence spans 362 residues: Talin rod domain-containing protein 1 (362 aa).

The segment at 1-26 is disordered; it reads MASGSAGKPTGEAASPAPASAIGGAS. An N-acetylalanine modification is found at Ala2. The segment covering 13–26 has biased composition (low complexity); that stretch reads AASPAPASAIGGAS.

As to quaternary structure, may homodimerize. Interacts with F-actin.

In terms of biological role, actin-binding protein which may have an oncogenic function and regulates cell proliferation, migration and invasion in cancer cells. This chain is Talin rod domain-containing protein 1, found in Homo sapiens (Human).